Consider the following 1611-residue polypeptide: DNA (cytosine-5)-methyltransferase 1 (1611 aa).

The tract at residues 1–120 is interaction with DMAP1; it reads MPARTAPARV…SQTSGEDCRV (120 aa). Residues 1 to 148 form an interaction with DNMT3A region; the sequence is MPARTAPARV…RRSKSDGETK (148 aa). Interaction with the PRC2/EED-EZH2 complex stretches follow at residues 1–334 and 306–603; these read MPAR…TEKK and KPQV…TIRQ. Ser15 carries the phosphoserine modification. In terms of domain architecture, DMAP1-binding spans 16 to 109; the sequence is RAFSLPDDVR…SREANGCLEN (94 aa). N6,N6-dimethyllysine; by EHMT2 is present on Lys70. The tract at residues 123 to 328 is disordered; that stretch reads AEKGKPPKPV…EEKRRRTTYR (206 aa). Position 133 is a phosphoserine (Ser133). Thr137 carries the post-translational modification Phosphothreonine. Residue Ser141 is modified to Phosphoserine. Lys142 is subject to N6-methyllysine; by SETD7. Position 143 is a phosphoserine; by PKB/AKT1 (Ser143). The interaction with DNMT3B stretch occupies residues 149–216; sequence SEVSSSPRIT…TSRERVAGLL (68 aa). Residues Ser152 and Ser154 each carry the phosphoserine modification. Lys160 bears the N6-acetyllysine mark. The tract at residues 163 to 174 is interaction with PCNA; it reads RQTTITSHFPRG. The segment covering 163–174 has biased composition (low complexity); it reads RQTTITSHFPRG. Position 166 is a phosphothreonine (Thr166). A Nuclear localization signal motif is present at residues 177–204; the sequence is KRKPEEEPEKVKSDDSVDEEKDQEEKRR. 5 stretches are compositionally biased toward basic and acidic residues: residues 178–191, 199–212, 220–265, 279–311, and 319–328; these read RKPEEEPEKVKSDD, QEEKRRRVTSRERV, EPGR…RDVR, KDEKRHRSQPKDLASKRRPEEKEPERVKPQVSD, and EEKRRRTTYR. At Lys188 the chain carries N6-acetyllysine. Residue Lys257 is modified to N6-acetyllysine; alternate. Residue Lys257 forms a Glycyl lysine isopeptide (Lys-Gly) (interchain with G-Cter in SUMO2); alternate linkage. Residue Ser310 is modified to Phosphoserine. The tract at residues 329-548 is DNA replication foci-targeting sequence; the sequence is ELTEKKMTRT…NLNRFTEDSL (220 aa). Residues Cys351 and Cys354 each coordinate Zn(2+). Phosphoserine is present on residues Ser392 and Ser396. Residues Cys412 and His416 each contribute to the Zn(2+) site. A phosphoserine mark is found at Ser507 and Ser547. The disordered stretch occupies residues 594–614; sequence RAERRQTIRQPAKEKDKGPTK. A CXXC-type zinc finger spans residues 643 to 689; the sequence is NAFKRRRCGVCEICQQPECGKCKACKDMVKFGGSGRSKQACQKRRCP. Zn(2+) contacts are provided by Cys650, Cys653, Cys656, Cys661, Cys664, Cys667, Cys683, and Cys688. The autoinhibitory linker stretch occupies residues 690-751; sequence NMAMKEADDD…SYYKKVCIDS (62 aa). The tract at residues 695 to 726 is disordered; that stretch reads EADDDEEVDDNIPEMPSPKKMHQGKKKKQNKN. A compositionally biased stretch (acidic residues) spans 696–706; sequence ADDDEEVDDNI. Ser711 is subject to Phosphoserine. The span at 713–725 shows a compositional bias: basic residues; it reads KKMHQGKKKKQNK. Phosphoserine is present on Ser729. N6-acetyllysine is present on Lys746. Positions 752–877 constitute a BAH 1 domain; that stretch reads ETLEVGDCVS…QDYARFESPP (126 aa). Residue Ser875 is modified to Phosphoserine. 5 positions are modified to N6-acetyllysine: Lys888, Lys954, Lys958, Lys972, and Lys1051. In terms of domain architecture, BAH 2 spans 969-1097; that stretch reads HYRKYSDYIK…AKSKSFEDPP (129 aa). Residues 1091–1126 are disordered; the sequence is KSFEDPPNHARSTGNKGKGKGKGKNRTKSQTCEPSE. Tandem repeats lie at residues 1106-1107, 1108-1109, 1110-1111, and 1112-1113. The 5 X 2 AA tandem repeats of K-G stretch occupies residues 1106 to 1115; the sequence is KGKGKGKGKN. Residues 1107-1117 are compositionally biased toward basic residues; sequence GKGKGKGKNRT. An N6-acetyllysine mark is found at Lys1108, Lys1110, Lys1112, Lys1114, and Lys1118. A 5; approximate repeat occupies 1114–1115; that stretch reads KN. The tract at residues 1118–1611 is interaction with the PRC2/EED-EZH2 complex; the sequence is KSQTCEPSEL…AKIKEEAAKD (494 aa). The SAM-dependent MTase C5-type domain occupies 1136–1595; sequence LRTLDVFSGC…LEIKRCMLAK (460 aa). The tract at residues 1136–1611 is catalytic; it reads LRTLDVFSGC…AKIKEEAAKD (476 aa). S-adenosyl-L-methionine contacts are provided by residues Ser1143, 1147–1148, 1165–1166, 1187–1188, and Cys1188; these read GL, EM, and DC. The active site involves Cys1223. Residues Lys1346 and Lys1412 each carry the N6-acetyllysine modification. S-adenosyl-L-methionine-binding residues include Asn1574 and Val1576. Lys1605 participates in a covalent cross-link: Glycyl lysine isopeptide (Lys-Gly) (interchain with G-Cter in SUMO2).

It belongs to the class I-like SAM-binding methyltransferase superfamily. C5-methyltransferase family. Homodimer. Forms a stable complex with E2F1, BB1 and HDAC1. Forms a complex with DMAP1 and HDAC2, with direct interaction. Interacts with the PRC2/EED-EZH2 complex. Probably part of a corepressor complex containing ZNF304, TRIM28, SETDB1 and DNMT1. Interacts with UHRF1; promoting its recruitment to hemimethylated DNA. Interacts with USP7, promoting its deubiquitination. Interacts with PCNA. Interacts with MBD2 and MBD3. Interacts with DNMT3A and DNMT3B. Interacts with UBC9. Interacts with CSNK1D. Interacts with HDAC1. Interacts with BAZ2A/TIP5. Interacts with SIRT7. Interacts with ZNF263; recruited to the SIX3 promoter along with other proteins involved in chromatin modification and transcriptional corepression where it contributes to transcriptional repression. Interacts with L3MBTL3 and DCAF5; the interaction requires DNMT1 methylation at Lys-142 and is necessary to target DNMT1 for ubiquitination by the CRL4-DCAF5 E3 ubiquitin ligase complex and proteasomal degradation. Interacts with PHF20L1; the interaction requires DNMT1 methylation at Lys-142 and protects DNMT1 from ubiquitination and proteasomal degradation. Post-translationally, sumoylated; sumoylation increases activity. In terms of processing, acetylation on multiple lysines, mainly by KAT2B/PCAF, regulates cell cycle G(2)/M transition. Deacetylation of Lys-1346 and Lys-1412 by SIRT1 increases methyltransferase activity. Phosphorylation of Ser-154 by CDKs is important for enzymatic activity and protein stability. Phosphorylation of Ser-143 by AKT1 prevents methylation by SETD7 thereby increasing DNMT1 stability. Post-translationally, methylation at Lys-142 by SETD7 is necessary for the regulation of DNMT1 proteasomal degradation. In terms of processing, ubiquitinated by UHRF1; interaction with USP7 counteracts ubiquitination by UHRF1 by promoting deubiquitination and preventing degradation by the proteasome.

It is found in the nucleus. The catalysed reaction is a 2'-deoxycytidine in DNA + S-adenosyl-L-methionine = a 5-methyl-2'-deoxycytidine in DNA + S-adenosyl-L-homocysteine + H(+). Its function is as follows. Methylates CpG residues. Preferentially methylates hemimethylated DNA. Associates with DNA replication sites in S phase maintaining the methylation pattern in the newly synthesized strand, that is essential for epigenetic inheritance. Associates with chromatin during G2 and M phases to maintain DNA methylation independently of replication. It is responsible for maintaining methylation patterns established in development. DNA methylation is coordinated with methylation of histones. Mediates transcriptional repression by direct binding to HDAC2. In association with DNMT3B and via the recruitment of CTCFL/BORIS, involved in activation of BAG1 gene expression by modulating dimethylation of promoter histone H3 at H3K4 and H3K9. Probably forms a corepressor complex required for activated KRAS-mediated promoter hypermethylation and transcriptional silencing of tumor suppressor genes (TSGs) or other tumor-related genes in colorectal cancer (CRC) cells. Also required to maintain a transcriptionally repressive state of genes in undifferentiated embryonic stem cells (ESCs). Associates at promoter regions of tumor suppressor genes (TSGs) leading to their gene silencing. Promotes tumor growth. This is DNA (cytosine-5)-methyltransferase 1 (DNMT1) from Bos taurus (Bovine).